A 415-amino-acid chain; its full sequence is DNA polymerase IV 2 (415 aa).

The UmuC domain occupies 7-183; sequence ILHADLDAFY…LPVSLMWGVG (177 aa). Mg(2+) is bound by residues Asp-11 and Asp-101. Glu-102 is a catalytic residue.

This sequence belongs to the DNA polymerase type-Y family. Monomer. It depends on Mg(2+) as a cofactor.

It is found in the cytoplasm. It carries out the reaction DNA(n) + a 2'-deoxyribonucleoside 5'-triphosphate = DNA(n+1) + diphosphate. Functionally, poorly processive, error-prone DNA polymerase involved in untargeted mutagenesis. Copies undamaged DNA at stalled replication forks, which arise in vivo from mismatched or misaligned primer ends. These misaligned primers can be extended by PolIV. Exhibits no 3'-5' exonuclease (proofreading) activity. May be involved in translesional synthesis, in conjunction with the beta clamp from PolIII. This Mesorhizobium japonicum (strain LMG 29417 / CECT 9101 / MAFF 303099) (Mesorhizobium loti (strain MAFF 303099)) protein is DNA polymerase IV 2 (dinB2).